Consider the following 323-residue polypeptide: Olfactory receptor 6T1 (323 aa).

At 1-25 the chain is on the extracellular side; it reads MNPENWTQVTSFVLLGFPSSHLIQF. A glycan (N-linked (GlcNAc...) asparagine) is linked at asparagine 5. Residues 26-46 form a helical membrane-spanning segment; that stretch reads LVFLGLMVTYIVTATGKLLII. Residues 47 to 54 are Cytoplasmic-facing; it reads VLSWIDQR. Residues 55–75 traverse the membrane as a helical segment; the sequence is LHIQMYFFLRNFSFLELLLVT. The Extracellular portion of the chain corresponds to 76-99; sequence VVVPKMLVVILTGDHTISFVSCII. A disulfide bridge connects residues cysteine 97 and cysteine 189. The chain crosses the membrane as a helical span at residues 100-120; it reads QSYLYFFLGTTDFFLLAVMSL. The Cytoplasmic segment spans residues 121 to 139; the sequence is DRYLAICRPLRYETLMNGH. A helical transmembrane segment spans residues 140-160; sequence VCSQLVLASWLAGFLWVLCPT. Topologically, residues 161 to 197 are extracellular; it reads VLMASLPFCGPNGIDHFFRDSWPLLRLSCGDTHLLKL. The helical transmembrane segment at 198–217 threads the bilayer; the sequence is VAFMLSTLVLLGSLALTSVS. At 218-237 the chain is on the cytoplasmic side; sequence YACILATVLRAPTAAERRKA. A helical membrane pass occupies residues 238 to 258; it reads FSTCASHLTVVVIIYGSSIFL. Residues 259–271 lie on the Extracellular side of the membrane; sequence YIRMSEAQSKLLN. A helical membrane pass occupies residues 272-292; sequence KGASVLSCIITPLLNPFIFTL. Over 293-323 the chain is Cytoplasmic; that stretch reads RNDKVQQALREALGWPRLTAVMKLRVTSQRK.

Belongs to the G-protein coupled receptor 1 family.

It localises to the cell membrane. Functionally, odorant receptor. This is Olfactory receptor 6T1 (OR6T1) from Homo sapiens (Human).